Consider the following 85-residue polypeptide: Turmerin (85 aa).

Post-translationally, the N-terminus is blocked.

Functionally, inhibition of trypsin. Has anticarcinogenic activity, prevents transformation of DMBA-treated JB6 cells. Has antipromoter activity, prevents promotion by tetradecanoyl phorbal acetate (TPA) in JB6 cells. Prevents tertiary butyl hydroperoxide-induced mutagenesis. Protects AT base pairs and shows antimutagenesis activity in TA102 and TA104 S.typhimurium mutagenesis tests. Inhibits paw edema formation induced by phospholipase A2 in Swiss Wistar mice. Prevents the release of arachidonate, the parent compound for the synthesis of prostaglandins and prostacyclins. Has antimalarial activity, kills P.falciparum. Has antivenom activity, nullifies the lethal effects of N.naja venom and inhibits phospholipase A2 present in N.naja venom. Has antifungal activity, inhibits cilia formation by A.niger. Is not toxic or allergenic. This Curcuma longa (Turmeric) protein is Turmerin.